Consider the following 206-residue polypeptide: Guanylate kinase (206 aa).

Positions 6–184 (GILFILSGPS…AVDKVKTIIK (179 aa)) constitute a Guanylate kinase-like domain. Position 13-20 (13-20 (GPSGVGKG)) interacts with ATP.

The protein belongs to the guanylate kinase family.

Its subcellular location is the cytoplasm. The enzyme catalyses GMP + ATP = GDP + ADP. Its function is as follows. Essential for recycling GMP and indirectly, cGMP. The polypeptide is Guanylate kinase (Oceanobacillus iheyensis (strain DSM 14371 / CIP 107618 / JCM 11309 / KCTC 3954 / HTE831)).